The following is a 558-amino-acid chain: Inositol-3-phosphate synthase 1 (558 aa).

NAD(+)-binding residues include Gly-67, Gly-68, Asn-69, Asn-70, Asp-141, Ser-177, Val-178, Gln-188, Arg-191, Thr-228, Ala-229, Asn-230, Thr-231, Gly-278, Ser-279, Asp-303, Ser-306, Asn-337, Asn-338, Asp-339, and Lys-352. The residue at position 279 (Ser-279) is a Phosphoserine. Ser-357 carries the phosphoserine modification. NAD(+) contacts are provided by Gly-390, Asp-391, Asp-419, and Ser-420. The interval 537 to 558 (ATNGCTGDANGHLQEEPPMPTT) is disordered.

It belongs to the myo-inositol 1-phosphate synthase family. The cofactor is NAD(+). Phosphorylation at Ser-279 and Ser-357 may be associated with a decrease in activity. Highly expressed in testis, ovary, heart, placenta and pancreas. Weakly expressed in blood leukocyte, thymus, skeletal muscle and colon.

Its subcellular location is the cytoplasm. The enzyme catalyses D-glucose 6-phosphate = 1D-myo-inositol 3-phosphate. It functions in the pathway polyol metabolism; myo-inositol biosynthesis; myo-inositol from D-glucose 6-phosphate: step 1/2. Inhibited by mood-stabilizing drugs such as valproate (VPA) and lithium. Its function is as follows. Key enzyme in myo-inositol biosynthesis pathway that catalyzes the conversion of glucose 6-phosphate to 1-myo-inositol 1-phosphate in a NAD-dependent manner. Rate-limiting enzyme in the synthesis of all inositol-containing compounds. This Homo sapiens (Human) protein is Inositol-3-phosphate synthase 1 (ISYNA1).